The primary structure comprises 348 residues: Anthranilate phosphoribosyltransferase (348 aa).

Residues glycine 84, 87-88, threonine 92, 94-97, 112-120, and serine 124 each bind 5-phospho-alpha-D-ribose 1-diphosphate; these read GD, NITT, and KHGNRSVSS. Glycine 84 provides a ligand contact to anthranilate. Threonine 96 contacts Mg(2+). Asparagine 115 is a binding site for anthranilate. An anthranilate-binding site is contributed by arginine 170. The Mg(2+) site is built by aspartate 228 and glutamate 229.

It belongs to the anthranilate phosphoribosyltransferase family. As to quaternary structure, homodimer. The cofactor is Mg(2+).

It catalyses the reaction N-(5-phospho-beta-D-ribosyl)anthranilate + diphosphate = 5-phospho-alpha-D-ribose 1-diphosphate + anthranilate. It functions in the pathway amino-acid biosynthesis; L-tryptophan biosynthesis; L-tryptophan from chorismate: step 2/5. Functionally, catalyzes the transfer of the phosphoribosyl group of 5-phosphorylribose-1-pyrophosphate (PRPP) to anthranilate to yield N-(5'-phosphoribosyl)-anthranilate (PRA). The sequence is that of Anthranilate phosphoribosyltransferase from Corynebacterium glutamicum (strain R).